The sequence spans 576 residues: Proline--tRNA ligase (576 aa).

Belongs to the class-II aminoacyl-tRNA synthetase family. ProS type 1 subfamily. In terms of assembly, homodimer.

The protein localises to the cytoplasm. The catalysed reaction is tRNA(Pro) + L-proline + ATP = L-prolyl-tRNA(Pro) + AMP + diphosphate. In terms of biological role, catalyzes the attachment of proline to tRNA(Pro) in a two-step reaction: proline is first activated by ATP to form Pro-AMP and then transferred to the acceptor end of tRNA(Pro). As ProRS can inadvertently accommodate and process non-cognate amino acids such as alanine and cysteine, to avoid such errors it has two additional distinct editing activities against alanine. One activity is designated as 'pretransfer' editing and involves the tRNA(Pro)-independent hydrolysis of activated Ala-AMP. The other activity is designated 'posttransfer' editing and involves deacylation of mischarged Ala-tRNA(Pro). The misacylated Cys-tRNA(Pro) is not edited by ProRS. In Finegoldia magna (strain ATCC 29328 / DSM 20472 / WAL 2508) (Peptostreptococcus magnus), this protein is Proline--tRNA ligase.